The sequence spans 38 residues: Large ribosomal subunit protein bL36 (38 aa).

It belongs to the bacterial ribosomal protein bL36 family.

The chain is Large ribosomal subunit protein bL36 from Buchnera aphidicola subsp. Schizaphis graminum (strain Sg).